Consider the following 164-residue polypeptide: Envelope glycoprotein L (164 aa).

An N-terminal signal peptide occupies residues 1–24 (MRSLDRYAIFILLACGLLWRPCLS).

The protein belongs to the herpesviridae glycoprotein L family. Interacts with glycoprotein H (gH); this interaction is necessary for the correct processing and cell surface expression of gH. The heterodimer gH/gL seems to interact with gB trimers during fusion.

It is found in the virion membrane. The protein resides in the host cell membrane. Its subcellular location is the host Golgi apparatus. The protein localises to the host trans-Golgi network. The heterodimer glycoprotein H-glycoprotein L is required for the fusion of viral and plasma membranes leading to virus entry into the host cell. Acts as a functional inhibitor of gH and maintains gH in an inhibited form. Upon binding to host integrins, gL dissociates from gH leading to activation of the viral fusion glycoproteins gB and gH. The chain is Envelope glycoprotein L from Equine herpesvirus 2 (strain 86/87) (EHV-2).